The primary structure comprises 117 residues: Large ribosomal subunit protein bL20c (117 aa).

It belongs to the bacterial ribosomal protein bL20 family.

It localises to the plastid. Its subcellular location is the chloroplast. In terms of biological role, binds directly to 23S ribosomal RNA and is necessary for the in vitro assembly process of the 50S ribosomal subunit. It is not involved in the protein synthesizing functions of that subunit. The polypeptide is Large ribosomal subunit protein bL20c (Eucalyptus globulus subsp. globulus (Tasmanian blue gum)).